The chain runs to 330 residues: Aspartate--ammonia ligase (330 aa).

The protein belongs to the class-II aminoacyl-tRNA synthetase family. AsnA subfamily.

It is found in the cytoplasm. It catalyses the reaction L-aspartate + NH4(+) + ATP = L-asparagine + AMP + diphosphate + H(+). It functions in the pathway amino-acid biosynthesis; L-asparagine biosynthesis; L-asparagine from L-aspartate (ammonia route): step 1/1. The sequence is that of Aspartate--ammonia ligase from Aeromonas salmonicida (strain A449).